The sequence spans 348 residues: Dihydroorotase (348 aa).

2 residues coordinate Zn(2+): H13 and H15. Residues 15–17 (HLR) and N41 each bind substrate. Zn(2+) contacts are provided by K99, H136, and H174. The residue at position 99 (K99) is an N6-carboxylysine. A substrate-binding site is contributed by H136. A substrate-binding site is contributed by L219. D247 lines the Zn(2+) pocket. D247 is a catalytic residue. 2 residues coordinate substrate: H251 and A263.

Belongs to the metallo-dependent hydrolases superfamily. DHOase family. Class II DHOase subfamily. In terms of assembly, homodimer. The cofactor is Zn(2+).

The catalysed reaction is (S)-dihydroorotate + H2O = N-carbamoyl-L-aspartate + H(+). It participates in pyrimidine metabolism; UMP biosynthesis via de novo pathway; (S)-dihydroorotate from bicarbonate: step 3/3. Catalyzes the reversible cyclization of carbamoyl aspartate to dihydroorotate. The polypeptide is Dihydroorotase (Rhizobium etli (strain ATCC 51251 / DSM 11541 / JCM 21823 / NBRC 15573 / CFN 42)).